The following is a 22-amino-acid chain: Cysteine proteinase (22 aa).

Residues 1–22 (GADDSDWRKKGAVNVIXKDQGQ) are disordered.

The protein belongs to the peptidase C1 family.

The chain is Cysteine proteinase from Trichomonas vaginalis.